A 294-amino-acid chain; its full sequence is Nucleotide-binding protein NT01CX_1284 (294 aa).

Residue 8-15 (GLSGAGKS) coordinates ATP. GTP is bound at residue 59–62 (DIRG).

It belongs to the RapZ-like family.

Functionally, displays ATPase and GTPase activities. The sequence is that of Nucleotide-binding protein NT01CX_1284 from Clostridium novyi (strain NT).